The primary structure comprises 890 residues: Wolframin (890 aa).

Met1 bears the N-acetylmethionine mark. Positions 1–86 (MDSNTAPLGP…TGPTKGDMEI (86 aa)) are disordered. The interval 1–321 (MDSNTAPLGP…MHWLSTIIPT (321 aa)) is interaction with ATP6V1A. Positions 10-20 (PSCPQPPPAPQ) are enriched in pro residues. Phosphothreonine; by FAM20C is present on Thr30. Phosphoserine; by FAM20C is present on Ser32. The residue at position 157 (Ser157) is a Phosphoserine. Helical transmembrane passes span 314-334 (WLST…FIVS), 340-360 (FFAF…MVIC), 402-422 (LEPY…FPIA), 427-447 (IPCS…YLSL), 465-485 (AGLL…KVLG), 496-516 (LVVL…YLFF), 529-549 (CYLV…VILL), 563-583 (YFLF…VGVL), 589-609 (FTSL…VPLL), and 632-652 (MVKL…FYVY). Topologically, residues 653 to 869 (RSEGMKVYNS…HVKIEHDWRS (217 aa)) are lumenal. N-linked (GlcNAc...) asparagine glycosylation is found at Asn661 and Asn746. Residues 870-890 (TVHGAVKFAFDFFFFPFLSAA) traverse the membrane as a helical segment.

Interacts with ATP6V1A. As to expression, highly expressed in heart followed by brain, placenta, lung and pancreas. Weakly expressed in liver, kidney and skeletal muscle. Also expressed in islet and beta-cell insulinoma cell line.

It is found in the endoplasmic reticulum membrane. It localises to the cytoplasmic vesicle. The protein localises to the secretory vesicle. Functionally, participates in the regulation of cellular Ca(2+) homeostasis, at least partly, by modulating the filling state of the endoplasmic reticulum Ca(2+) store. Negatively regulates the ER stress response and positively regulates the stability of V-ATPase subunits ATP6V1A and ATP1B1 by preventing their degradation through an unknown proteasome-independent mechanism. This Homo sapiens (Human) protein is Wolframin (WFS1).